Reading from the N-terminus, the 95-residue chain is Histone-like DNA-binding protein (95 aa).

It belongs to the bacterial histone-like protein family.

This Rickettsia montanensis protein is Histone-like DNA-binding protein.